Here is a 404-residue protein sequence, read N- to C-terminus: MLLEQLKQAAEQRHALALTRRRRIAHTACAPHQAVGEEGTESESLLTFCSNDYLGLANHPQVIAALVEGAQRYGAGSGASHLVSGHSLAHAQLEAELARWFAPHIAQARTLYFCTGYMANMAVLTALGAAGATLFCESLNHASLIDGARLARADVQRYPHCDTDALQALLAASTSARKLIVTDSVFSMDGNVAPLRRLLELAERHDAWIVVDDAHGFGVLGEQGHGVLEALGLSSERLIYIGTLGKAAGVAGAFVAAHATIIEHLVNTARPYIYTTAAPPAVAHALLASLAIIEGDEGRQRRAQLARCIATLREGLAQLAASAGWTLGDSQTAVQPLIVGDNGAALALSAALEADGIRVGAIRPPTVPEGTARLRITLSAAHTEADVRRLLEALSAAVAQREAA.

Arg-20 is a substrate binding site. 116 to 117 contacts pyridoxal 5'-phosphate; the sequence is GY. His-141 contributes to the substrate binding site. Positions 187, 215, and 243 each coordinate pyridoxal 5'-phosphate. N6-(pyridoxal phosphate)lysine is present on Lys-246. Thr-366 contributes to the substrate binding site.

It belongs to the class-II pyridoxal-phosphate-dependent aminotransferase family. BioF subfamily. Homodimer. The cofactor is pyridoxal 5'-phosphate.

The catalysed reaction is 6-carboxyhexanoyl-[ACP] + L-alanine + H(+) = (8S)-8-amino-7-oxononanoate + holo-[ACP] + CO2. It functions in the pathway cofactor biosynthesis; biotin biosynthesis. Functionally, catalyzes the decarboxylative condensation of pimeloyl-[acyl-carrier protein] and L-alanine to produce 8-amino-7-oxononanoate (AON), [acyl-carrier protein], and carbon dioxide. The polypeptide is 8-amino-7-oxononanoate synthase (Cupriavidus taiwanensis (strain DSM 17343 / BCRC 17206 / CCUG 44338 / CIP 107171 / LMG 19424 / R1) (Ralstonia taiwanensis (strain LMG 19424))).